Consider the following 89-residue polypeptide: OMEGA-ectatommitoxin(02)-Rm1b (89 aa).

An N-terminal signal peptide occupies residues 1–30; that stretch reads MKDSYISIVIAYLMVTFILVSSMPIEGEKG. Cystine bridges form between cysteine 39–cysteine 52, cysteine 47–cysteine 68, and cysteine 70–cysteine 79. One can recognise an EGF-like domain in the interval 43–80; it reads YANYCFNGKCVHFVAQDEPGKPCYSCICDKFYIGKRCG.

This sequence belongs to the EGF domain peptide family. As to expression, expressed by the venom gland.

The protein localises to the secreted. Its function is as follows. Ant peptide with probable defensive activity which acts as a potent agonist of the mammalian epidermal growth factor receptor (EGFR). Mimics, both structurally and functionally, vertebrate epidermal growth factor (EGF) peptide hormones. In vivo, intraplantar injection in mice causes long-lasting (several days) hypersensitivity of the injected paw to both mechanical and thermal stimuli. Its long-lasting effect is unusual for venom toxins whose effects are usually immediate. One possible explanation is that it would reduce the duration of a nest attack, discourage future attacks, or enhance the actions of subsequent exposure to other pain-inducing venom peptides. The sequence is that of OMEGA-ectatommitoxin(02)-Rm1b from Rhytidoponera metallica (Australian green-headed ant).